The primary structure comprises 352 residues: Light dependent period A (352 aa).

4Fe-4S ferredoxin-type domains are found at residues 88-119 (RRAW…STGV) and 121-144 (RDRC…AQAW). Cysteine 97, cysteine 101, cysteine 105, cysteine 109, cysteine 124, cysteine 127, cysteine 130, and cysteine 134 together coordinate [4Fe-4S] cluster.

As to quaternary structure, interacts with KaiA, CikA and SasA; the complexes do not follow circadian rhythms. [4Fe-4S] cluster serves as cofactor.

Functions in an input pathway to the Kai circadian clock. Probably senses the metabolic state of the cell via plastoquinone levels and informs the clock to modulate the photoperiod length. Deletion decreases the ability of the bacteria to modulate the circadian period in response to altered light regimes. Mild overexpression increases the photoperiod. Rapidly degraded in the presence of the quinone analog DBMIB (2,5-dibromo-3-methyl-6-isopropyl-p-benzoquinone), an artifical electron acceptor for photosystem II that reduces the plastoquinone pool. Partially resonsible for sensitivity of CikA to DBMIB, influences the levels of KaiA. This is Light dependent period A from Synechococcus elongatus (strain ATCC 33912 / PCC 7942 / FACHB-805) (Anacystis nidulans R2).